Consider the following 297-residue polypeptide: Phosphoribosylaminoimidazole-succinocarboxamide synthase (297 aa).

This sequence belongs to the SAICAR synthetase family.

The enzyme catalyses 5-amino-1-(5-phospho-D-ribosyl)imidazole-4-carboxylate + L-aspartate + ATP = (2S)-2-[5-amino-1-(5-phospho-beta-D-ribosyl)imidazole-4-carboxamido]succinate + ADP + phosphate + 2 H(+). It functions in the pathway purine metabolism; IMP biosynthesis via de novo pathway; 5-amino-1-(5-phospho-D-ribosyl)imidazole-4-carboxamide from 5-amino-1-(5-phospho-D-ribosyl)imidazole-4-carboxylate: step 1/2. This chain is Phosphoribosylaminoimidazole-succinocarboxamide synthase, found in Mycobacteroides abscessus (strain ATCC 19977 / DSM 44196 / CCUG 20993 / CIP 104536 / JCM 13569 / NCTC 13031 / TMC 1543 / L948) (Mycobacterium abscessus).